The sequence spans 905 residues: A disintegrin and metalloproteinase with thrombospondin motifs 8 (905 aa).

The signal sequence occupies residues 1–28; it reads MLRDPTTTGWPPLLLLLLQLPPPPLVCG. A propeptide spanning residues 29–228 is cleaved from the precursor; that stretch reads APAGPGTGAQ…PFGSKTRSKR (200 aa). 2 disordered regions span residues 139-163 and 186-225; these read PQGAGDSLDQPHRLQRWGPGQRRED and NGQGQERSDNEEDRKQDKEGLLKETEDSRKVPPPFGSKTR. Basic and acidic residues predominate over residues 191–215; that stretch reads ERSDNEEDRKQDKEGLLKETEDSRK. One can recognise a Peptidase M12B domain in the interval 234-444; that stretch reads RFVETLLVAD…GHGDCLLDAP (211 aa). 10 disulfide bridges follow: C309/C362, C338/C344, C356/C439, C394/C423, C478/C502, C487/C523, C517/C528, C554/C591, C558/C596, and C569/C581. H378 is a binding site for Zn(2+). The active site involves E379. Positions 382 and 388 each coordinate Zn(2+). Residues N415, N480, and N506 are each glycosylated (N-linked (GlcNAc...) asparagine). In terms of domain architecture, Disintegrin spans 453-541; sequence GLPGHSTLYE…EDVENPKAVV (89 aa). Residues 542-597 enclose the TSP type-1 1 domain; it reads DGDWGPWRPWGQCSRTCGGGIQFSNRECDNPMPQNGGRFCLGERVKYQSCNTEECP. A glycan (N-linked (GlcNAc...) asparagine) is linked at N615. The tract at residues 706 to 847 is spacer; sequence RKISGSFTPF…RATTNIIQSL (142 aa). Residues 848 to 904 enclose the TSP type-1 2 domain; the sequence is PSAEWVLGDWSECPSTCRGSWQRRTVECRDPSGQASDTCDEALKPEDAKPCGSQPCP. The tract at residues 877 to 905 is disordered; sequence DPSGQASDTCDEALKPEDAKPCGSQPCPL.

Requires Zn(2+) as cofactor. Post-translationally, the precursor is cleaved by a furin endopeptidase. Glycosylated. Can be O-fucosylated by POFUT2 on a serine or a threonine residue found within the consensus sequence C1-X(2)-(S/T)-C2-G of the TSP type-1 repeat domains where C1 and C2 are the first and second cysteine residue of the repeat, respectively. Fucosylated repeats can then be further glycosylated by the addition of a beta-1,3-glucose residue by the glucosyltransferase, B3GALTL. Fucosylation mediates the efficient secretion of ADAMTS family members. Can also be C-glycosylated with one or two mannose molecules on tryptophan residues within the consensus sequence W-X-X-W of the TPRs, and N-glycosylated. These other glycosylations can also facilitate secretion. As to expression, expressed specifically in adult lung and heart and low expression during mouse development.

It localises to the secreted. Its subcellular location is the extracellular space. The protein resides in the extracellular matrix. Its function is as follows. Has anti-angiogenic properties. The protein is A disintegrin and metalloproteinase with thrombospondin motifs 8 (Adamts8) of Mus musculus (Mouse).